Reading from the N-terminus, the 249-residue chain is Ubiquinone/menaquinone biosynthesis C-methyltransferase UbiE (249 aa).

S-adenosyl-L-methionine is bound by residues threonine 72, aspartate 93, and 121–122 (NA).

The protein belongs to the class I-like SAM-binding methyltransferase superfamily. MenG/UbiE family.

The catalysed reaction is a 2-demethylmenaquinol + S-adenosyl-L-methionine = a menaquinol + S-adenosyl-L-homocysteine + H(+). The enzyme catalyses a 2-methoxy-6-(all-trans-polyprenyl)benzene-1,4-diol + S-adenosyl-L-methionine = a 5-methoxy-2-methyl-3-(all-trans-polyprenyl)benzene-1,4-diol + S-adenosyl-L-homocysteine + H(+). It participates in quinol/quinone metabolism; menaquinone biosynthesis; menaquinol from 1,4-dihydroxy-2-naphthoate: step 2/2. It functions in the pathway cofactor biosynthesis; ubiquinone biosynthesis. Its function is as follows. Methyltransferase required for the conversion of demethylmenaquinol (DMKH2) to menaquinol (MKH2) and the conversion of 2-polyprenyl-6-methoxy-1,4-benzoquinol (DDMQH2) to 2-polyprenyl-3-methyl-6-methoxy-1,4-benzoquinol (DMQH2). This chain is Ubiquinone/menaquinone biosynthesis C-methyltransferase UbiE, found in Hahella chejuensis (strain KCTC 2396).